The sequence spans 72 residues: Translation initiation factor IF-1 (72 aa).

Residues 1–72 (MAKEESIEVE…SKGRITYRYK (72 aa)) enclose the S1-like domain.

It belongs to the IF-1 family. In terms of assembly, component of the 30S ribosomal translation pre-initiation complex which assembles on the 30S ribosome in the order IF-2 and IF-3, IF-1 and N-formylmethionyl-tRNA(fMet); mRNA recruitment can occur at any time during PIC assembly.

The protein resides in the cytoplasm. Functionally, one of the essential components for the initiation of protein synthesis. Stabilizes the binding of IF-2 and IF-3 on the 30S subunit to which N-formylmethionyl-tRNA(fMet) subsequently binds. Helps modulate mRNA selection, yielding the 30S pre-initiation complex (PIC). Upon addition of the 50S ribosomal subunit IF-1, IF-2 and IF-3 are released leaving the mature 70S translation initiation complex. This chain is Translation initiation factor IF-1, found in Chlorobaculum tepidum (strain ATCC 49652 / DSM 12025 / NBRC 103806 / TLS) (Chlorobium tepidum).